The chain runs to 668 residues: Transketolase 2 (668 aa).

H26 is a binding site for substrate. Thiamine diphosphate is bound by residues H66 and 114-116; that span reads GPL. Position 155 (D155) interacts with Mg(2+). Positions 156 and 185 each coordinate thiamine diphosphate. Positions 185 and 187 each coordinate Mg(2+). Positions 261, 358, and 385 each coordinate substrate. Residue H261 participates in thiamine diphosphate binding. E413 serves as the catalytic Proton donor. Thiamine diphosphate is bound at residue F439. Residues H463, D471, and R522 each coordinate substrate.

The protein belongs to the transketolase family. As to quaternary structure, homodimer. The cofactor is Mg(2+). Ca(2+) is required as a cofactor. Mn(2+) serves as cofactor. It depends on Co(2+) as a cofactor. Requires thiamine diphosphate as cofactor.

The catalysed reaction is D-sedoheptulose 7-phosphate + D-glyceraldehyde 3-phosphate = aldehydo-D-ribose 5-phosphate + D-xylulose 5-phosphate. Functionally, catalyzes the transfer of a two-carbon ketol group from a ketose donor to an aldose acceptor, via a covalent intermediate with the cofactor thiamine pyrophosphate. The sequence is that of Transketolase 2 (tktB) from Pasteurella multocida (strain Pm70).